Reading from the N-terminus, the 163-residue chain is Large ribosomal subunit protein bL21 (163 aa).

Residues Lys-124 to Asp-163 form a disordered region.

It belongs to the bacterial ribosomal protein bL21 family. In terms of assembly, part of the 50S ribosomal subunit. Contacts protein L20.

Its function is as follows. This protein binds to 23S rRNA in the presence of protein L20. The sequence is that of Large ribosomal subunit protein bL21 from Bartonella quintana (strain Toulouse) (Rochalimaea quintana).